The following is a 431-amino-acid chain: Tyrosine--tRNA ligase (431 aa).

Tyr-34 is a binding site for L-tyrosine. A 'HIGH' region motif is present at residues 39 to 48; the sequence is PTADSLHIGH. 2 residues coordinate L-tyrosine: Tyr-171 and Gln-175. Residues 231 to 235 carry the 'KMSKS' region motif; that stretch reads KFGKT. Lys-234 serves as a coordination point for ATP. In terms of domain architecture, S4 RNA-binding spans 353–422; it reads INAVEALVKT…GKYTILRRGK (70 aa).

The protein belongs to the class-I aminoacyl-tRNA synthetase family. TyrS type 1 subfamily. In terms of assembly, homodimer.

Its subcellular location is the cytoplasm. The enzyme catalyses tRNA(Tyr) + L-tyrosine + ATP = L-tyrosyl-tRNA(Tyr) + AMP + diphosphate + H(+). Its function is as follows. Catalyzes the attachment of tyrosine to tRNA(Tyr) in a two-step reaction: tyrosine is first activated by ATP to form Tyr-AMP and then transferred to the acceptor end of tRNA(Tyr). The sequence is that of Tyrosine--tRNA ligase from Neisseria gonorrhoeae (strain ATCC 700825 / FA 1090).